A 143-amino-acid polypeptide reads, in one-letter code: MSEEKQWTEVFHAIDKDKNGFLTREEIAQCLKEVGVCPNVADKIIKETDMNSDGKISLEEYLNALRKLPPREKCVARWREVFQSIDKDGSGKVSIKELDEFLKTSGMDIDQNSLRNWMTQNDKNKDGELDYDEFLAYVRQTYK.

4 EF-hand domains span residues 2–37 (SEEK…VGVC), 41–71 (ADKI…LPPR), 73–108 (KCVA…SGMD), and 109–143 (IDQN…QTYK). Aspartate 15, aspartate 17, asparagine 19, glutamate 26, aspartate 49, asparagine 51, aspartate 53, lysine 55, glutamate 60, aspartate 86, aspartate 88, serine 90, lysine 92, glutamate 97, aspartate 122, asparagine 124, aspartate 126, glutamate 128, and glutamate 133 together coordinate Ca(2+).

As to expression, found in eggs.

Functionally, calcium-binding protein. This chain is 16 kDa calcium-binding protein, found in Schistosoma mansoni (Blood fluke).